A 527-amino-acid polypeptide reads, in one-letter code: SusD-like protein P25 (527 aa).

Residues 1 to 15 (MKIQNIIVYVFLIFS) form the signal peptide. Cys-16 carries N-palmitoyl cysteine lipidation. Cys-16 carries S-diacylglycerol cysteine lipidation.

The protein belongs to the SusD family.

It localises to the cell outer membrane. Functionally, polysaccharide-binding protein probably involved in ulvan degradation. Ulvan is the main polysaccharide component of the Ulvales (green seaweed) cell wall. It is composed of disaccharide building blocks comprising 3-sulfated rhamnose (Rha3S) linked to D-glucuronic acid (GlcA), L-iduronic acid (IduA), or D-xylose (Xyl). The SusD-like protein may mediate ulvan oligomer-binding before transport in the periplasm for further degradation. The chain is SusD-like protein P25 from Formosa agariphila (strain DSM 15362 / KCTC 12365 / LMG 23005 / KMM 3901 / M-2Alg 35-1).